A 279-amino-acid chain; its full sequence is Small ribosomal subunit protein uS2 (279 aa).

This sequence belongs to the universal ribosomal protein uS2 family. As to quaternary structure, component of the small ribosomal subunit. Mature ribosomes consist of a small (40S) and a large (60S) subunit. The 40S subunit contains about 33 different proteins and 1 molecule of RNA (18S). The 60S subunit contains about 49 different proteins and 3 molecules of RNA (28S, 5.8S and 5S). Interacts with ribosomal protein S21.

It is found in the cytoplasm. Required for the assembly and/or stability of the 40S ribosomal subunit. Required for the processing of the 20S rRNA-precursor to mature 18S rRNA in a late step of the maturation of 40S ribosomal subunits. This Schistosoma japonicum (Blood fluke) protein is Small ribosomal subunit protein uS2.